Here is a 65-residue protein sequence, read N- to C-terminus: U12-theraphotoxin-Cg1a (65 aa).

Residues 1 to 21 (MKTSVLLFMLGLTFLFDGLAA) form the signal peptide. The propeptide occupies 22 to 29 (INLQEGER). 3 disulfides stabilise this stretch: C31/C45, C38/C50, and C44/C57.

Belongs to the neurotoxin 10 (Hwtx-1) family. 31 (Jztx-15) subfamily. As to expression, expressed by the venom gland.

It localises to the secreted. Functionally, probable ion channel inhibitor. This is U12-theraphotoxin-Cg1a from Chilobrachys guangxiensis (Chinese earth tiger tarantula).